The chain runs to 410 residues: Enterobactin exporter EntS (410 aa).

Topologically, residues 1 to 21 (MNKQSWLLNLSLLKTHPAFRA) are cytoplasmic. The chain crosses the membrane as a helical span at residues 22–42 (VFLARFISIVSLGLLGVAVPV). At 43–55 (QIQMMTHSTWQVG) the chain is on the periplasmic side. Residues 56–76 (LSVTLTGGAMFVGLMVGGVLA) form a helical membrane-spanning segment. Residues 77–83 (DRYERKK) are Cytoplasmic-facing. The helical transmembrane segment at 84-104 (VILLARGTCGIGFIGLCLNAL) threads the bilayer. The Periplasmic segment spans residues 105-109 (LPEPS). The chain crosses the membrane as a helical span at residues 110 to 130 (LLAIYLLGLWDGFFASLGVTA). The Cytoplasmic segment spans residues 131-156 (LLAATSALVGRENLMQAGAITMLTVR). Residues 157 to 177 (LGSVISPMIGGLLLATGGVAW) form a helical membrane-spanning segment. A topological domain (periplasmic) is located at residue Asn-178. Residues 179–199 (YGLAAAGTFITLLPLLSLPEL) traverse the membrane as a helical segment. Over 200–218 (PPPPQPLEHPLKSLLAGFR) the chain is Cytoplasmic. Residues 219 to 233 (FLLASPLLGGLLTMA) form a helical membrane-spanning segment. At 234-250 (SAVLVLYPALADNWQMS) the chain is on the periplasmic side. A helical transmembrane segment spans residues 251–271 (AAQIGFLYAAIPLGAAIGALT). Topologically, residues 272 to 281 (SGKLAHSARP) are cytoplasmic. Residues 282–301 (GLLMLLSTLGSFLAIGLFGL) traverse the membrane as a helical segment. The Periplasmic portion of the chain corresponds to 302–307 (MPMWIL). A helical transmembrane segment spans residues 308–330 (GVVCLALFGWLSAVSSLLQYTML). Residues 331–350 (QTQTPEAMLGRINGLWTAQN) are Cytoplasmic-facing. The helical transmembrane segment at 351–371 (VTGDAIGAALLGGLGAMMTPV) threads the bilayer. Residue Ala-372 is a topological domain, periplasmic. Residues 373-393 (SASASGFGLLIIGVLLLLVLV) traverse the membrane as a helical segment. Residues 394 to 410 (ELRRFRQTPPQVTASDS) lie on the Cytoplasmic side of the membrane.

It belongs to the major facilitator superfamily. EntS (TC 2.A.1.38) family.

The protein resides in the cell inner membrane. In terms of biological role, component of an export pathway for enterobactin. The chain is Enterobactin exporter EntS from Shigella flexneri.